The following is a 51-amino-acid chain: Astexin-1 (51 aa).

The propeptide occupies 1–28; sequence MHTPIISETVQPKTAGLIVLGKASAETR. Positions 29-37 form a cross-link, isoaspartyl glycine isopeptide (Gly-Asp); that stretch reads GLSQGVEPD.

In terms of processing, this lasso peptide is probably hydrolyzed to a linear form by the isopeptidase AtxE1, in vivo.

Shows weak antimicrobial activity against its phylogenetic relative Caulobacter crescentus. Does not show activity against other bacteria tested (E.coli, Vibrio sp, Burkhoderia thailandensis, and Salmonella newport). This chain is Astexin-1, found in Asticcacaulis excentricus (strain ATCC 15261 / DSM 4724 / KCTC 12464 / NCIMB 9791 / VKM B-1370 / CB 48).